The chain runs to 148 residues: Putative anti-anti-sigma factor Rv2638 (148 aa).

The STAS domain occupies 30–141 (LRATTDGSGA…PTVDTALGKG (112 aa)).

The protein belongs to the anti-sigma-factor antagonist family. As to quaternary structure, interacts with unphosphorylated OprA.

This is Putative anti-anti-sigma factor Rv2638 from Mycobacterium tuberculosis (strain ATCC 25618 / H37Rv).